Here is a 97-residue protein sequence, read N- to C-terminus: YcgL domain-containing protein PSEEN4034 (97 aa).

Positions 3–87 (RICSIYKSPR…PDDDYIEHLP (85 aa)) constitute a YcgL domain.

The protein is YcgL domain-containing protein PSEEN4034 of Pseudomonas entomophila (strain L48).